We begin with the raw amino-acid sequence, 503 residues long: Podocalyxin (503 aa).

Positions 1 to 21 (MPPTTALSALLLLLLSPASHS) are cleaved as a signal peptide. A disordered region spans residues 19–236 (SHSHNGNETS…PLTSQTPGIT (218 aa)). The span at 20–50 (HSHNGNETSTSAIKSSTVQSHQSATTSTEVT) shows a compositional bias: polar residues. The Extracellular segment spans residues 22–404 (HNGNETSTSA…PPEVNEDRFS (383 aa)). Residues Asn-25, Asn-89, and Asn-94 are each glycosylated (N-linked (GlcNAc...) asparagine). Residues 61–91 (STQPSNPTPFTTSTQSPSMPTSTPNPTSNQS) are compositionally biased toward low complexity. Over residues 107–126 (TSSPSSTAFTSSSGQTASSG) the composition is skewed to low complexity. A compositionally biased stretch (polar residues) spans 131–183 (DSFTTAPTTTLGLINVSSQPTDLNTTSKLLSTPTTDNTTSPQQPVDSSPSTAS). 4 N-linked (GlcNAc...) asparagine glycosylation sites follow: Asn-145, Asn-154, Asn-167, and Asn-206. Positions 196–208 (SSSGSTPSTDNST) are enriched in low complexity. Positions 222-236 (SEATQPLTSQTPGIT) are enriched in polar residues. Asn-303 is a glycosylation site (N-linked (GlcNAc...) asparagine). The chain crosses the membrane as a helical span at residues 405 to 425 (LPLIITIVCMASFLLLVAALY). Residues 426-503 (GCCHQRISQR…DLDEEEDTHL (78 aa)) lie on the Cytoplasmic side of the membrane. Phosphothreonine is present on Thr-463. The residue at position 482 (Ser-482) is a Phosphoserine. Phosphothreonine is present on Thr-501.

It belongs to the podocalyxin family. In terms of assembly, monomer; when associated with the membrane raft. Oligomer; when integrated in the apical membrane. Found in a complex with EZR, PODXL and NHERF2. Associates with the actin cytoskeleton through complex formation with EZR and NHERF2. Interacts (via the C-terminal PDZ-binding motif DTHL) with NHERF1 (via the PDZ domains); interaction is not detected in glomerular epithelium cells, take place early in the secretory pathway and is necessary for its apical membrane sorting. Interacts (via the C-terminal PDZ-binding motif DTHL) with NHERF2 (via the PDZ 1 domain); interaction is detected in glomerular epithelium cells. Interacts with EZR. N- and O-linked glycosylated. Sialoglycoprotein. As to expression, expressed in liver cells and hematopoietic cells (at protein level). Glomerular epithelium cell (podocyte).

The protein resides in the apical cell membrane. It is found in the cell projection. Its subcellular location is the microvillus. The protein localises to the membrane raft. It localises to the lamellipodium. The protein resides in the filopodium. It is found in the ruffle. Its subcellular location is the membrane. In terms of biological role, involved in the regulation of both adhesion and cell morphology and cancer progression. Functions as an anti-adhesive molecule that maintains an open filtration pathway between neighboring foot processes in the podocyte by charge repulsion. Acts as a pro-adhesive molecule, enhancing the adherence of cells to immobilized ligands, increasing the rate of migration and cell-cell contacts in an integrin-dependent manner. Induces the formation of apical actin-dependent microvilli. Involved in the formation of a preapical plasma membrane subdomain to set up initial epithelial polarization and the apical lumen formation during renal tubulogenesis. Plays a role in cancer development and aggressiveness by inducing cell migration and invasion through its interaction with the actin-binding protein EZR. Affects EZR-dependent signaling events, leading to increased activities of the MAPK and PI3K pathways in cancer cells. The polypeptide is Podocalyxin (Podxl) (Mus musculus (Mouse)).